We begin with the raw amino-acid sequence, 330 residues long: DNA-directed RNA polymerase subunit alpha (330 aa).

The tract at residues M1–K232 is alpha N-terminal domain (alpha-NTD). Positions E248–D330 are alpha C-terminal domain (alpha-CTD).

It belongs to the RNA polymerase alpha chain family. Homodimer. The RNAP catalytic core consists of 2 alpha, 1 beta, 1 beta' and 1 omega subunit. When a sigma factor is associated with the core the holoenzyme is formed, which can initiate transcription.

The catalysed reaction is RNA(n) + a ribonucleoside 5'-triphosphate = RNA(n+1) + diphosphate. In terms of biological role, DNA-dependent RNA polymerase catalyzes the transcription of DNA into RNA using the four ribonucleoside triphosphates as substrates. This chain is DNA-directed RNA polymerase subunit alpha, found in Porphyromonas gingivalis (strain ATCC BAA-308 / W83).